The chain runs to 224 residues: Probable molybdenum cofactor guanylyltransferase (224 aa).

Residues 20-22, Lys33, Asp88, and Asp117 contribute to the GTP site; that span reads LAG. Residue Asp117 coordinates Mg(2+).

Belongs to the MobA family. Requires Mg(2+) as cofactor.

The protein resides in the cytoplasm. The catalysed reaction is Mo-molybdopterin + GTP + H(+) = Mo-molybdopterin guanine dinucleotide + diphosphate. Functionally, transfers a GMP moiety from GTP to Mo-molybdopterin (Mo-MPT) cofactor (Moco or molybdenum cofactor) to form Mo-molybdopterin guanine dinucleotide (Mo-MGD) cofactor. The chain is Probable molybdenum cofactor guanylyltransferase from Methanosarcina mazei (strain ATCC BAA-159 / DSM 3647 / Goe1 / Go1 / JCM 11833 / OCM 88) (Methanosarcina frisia).